Reading from the N-terminus, the 298-residue chain is CD-NTase-associated protein 6 (298 aa).

ATP is bound by residues glycine 80–alanine 85 and arginine 204–arginine 205.

It belongs to the AAA ATPase family. Homohexamer, forms a 1:1:6 CdnC:Cap7:Cap6 complex.

Regulates complex assembly in a CBASS antivirus system. CBASS (cyclic oligonucleotide-based antiphage signaling system) provides immunity against bacteriophage. The CD-NTase protein synthesizes cyclic nucleotides in response to infection; these serve as specific second messenger signals. The signals activate a diverse range of effectors, leading to bacterial cell death and thus abortive phage infection. A type III CBASS system. Expression of this CBASS system (Cap18-Cap6-Cap7-CdnC-CapW-Cap17) in a susceptible E.coli (strain MG1655) confers resistance to bacteriophage P1. Binds and disassembles an active CdnC:Cap7 complex, inhibiting the complex's ability to synthesize cyclic nucleotide second messengers. An AAA+-ATPase remodeler, in the absence of foreign threat Cap6 probably maintains the Cap7 protein in its open, inactive state. Once activated (presumably by a bacteriophage protein) Cap7 binds to and activates its cognate CD-NTase (CdnC in this bacteria) to synthesize a cyclic nucleotide second messenger which leads to abortive phage infection. The sequence is that of CD-NTase-associated protein 6 from Escherichia coli (strain KTE188).